A 574-amino-acid chain; its full sequence is Urease subunit alpha (574 aa).

A Urease domain is found at 131–574; sequence GAIDSHIHFI…LPMAQRYLLI (444 aa). The Ni(2+) site is built by His-136, His-138, and Lys-219. An N6-carboxylysine modification is found at Lys-219. His-221 lines the substrate pocket. Residues His-248 and His-274 each coordinate Ni(2+). His-322 functions as the Proton donor in the catalytic mechanism. Residue Asp-362 participates in Ni(2+) binding.

It belongs to the metallo-dependent hydrolases superfamily. Urease alpha subunit family. As to quaternary structure, heterotrimer of UreA (gamma), UreB (beta) and UreC (alpha) subunits. Three heterotrimers associate to form the active enzyme. It depends on Ni cation as a cofactor. In terms of processing, carboxylation allows a single lysine to coordinate two nickel ions.

Its subcellular location is the cytoplasm. The catalysed reaction is urea + 2 H2O + H(+) = hydrogencarbonate + 2 NH4(+). It participates in nitrogen metabolism; urea degradation; CO(2) and NH(3) from urea (urease route): step 1/1. This Prochlorococcus marinus (strain MIT 9303) protein is Urease subunit alpha.